The chain runs to 419 residues: Carbohydrate sulfotransferase 12 (419 aa).

At 1–5 (MTKPR) the chain is on the cytoplasmic side. Residues 6–26 (LFRLWLVLGSALMILLIIVYW) form a helical; Signal-anchor for type II membrane protein membrane-spanning segment. Topologically, residues 27–419 (DNVGTAHFYL…YPKPENLLRD (393 aa)) are lumenal. Basic and acidic residues predominate over residues 78–87 (HNDLSRRKTE). Positions 78–99 (HNDLSRRKTEQPPVPAPSKPVL) are disordered. An N-linked (GlcNAc...) asparagine glycan is attached at Asn-139. 176–182 (PKVACTN) provides a ligand contact to 3'-phosphoadenylyl sulfate. An N-linked (GlcNAc...) asparagine glycan is attached at Asn-214. Residue 250 to 258 (RDPFVRLIS) participates in 3'-phosphoadenylyl sulfate binding. Asn-285 and Asn-375 each carry an N-linked (GlcNAc...) asparagine glycan.

The protein belongs to the sulfotransferase 2 family.

The protein resides in the golgi apparatus membrane. It carries out the reaction chondroitin beta-D-glucuronate + n 3'-phosphoadenylyl sulfate = chondroitin 4'-sulfate + n adenosine 3',5'-bisphosphate + n H(+). Its function is as follows. Catalyzes the transfer of sulfate to position 4 of the N-acetylgalactosamine (GalNAc) residue of chondroitin and desulfated dermatan sulfate. Chondroitin sulfate constitutes the predominant proteoglycan present in cartilage and is distributed on the surfaces of many cells and extracellular matrices. Activity toward partially desulfated dermatan sulfate is however lower. Does not form 4, 6-di-O-sulfated GalNAc when chondroitin sulfate C is used as an acceptor. This is Carbohydrate sulfotransferase 12 (Chst12) from Mus musculus (Mouse).